The following is an 80-amino-acid chain: Exodeoxyribonuclease 7 small subunit (80 aa).

It belongs to the XseB family. Heterooligomer composed of large and small subunits.

Its subcellular location is the cytoplasm. The catalysed reaction is Exonucleolytic cleavage in either 5'- to 3'- or 3'- to 5'-direction to yield nucleoside 5'-phosphates.. Its function is as follows. Bidirectionally degrades single-stranded DNA into large acid-insoluble oligonucleotides, which are then degraded further into small acid-soluble oligonucleotides. The polypeptide is Exodeoxyribonuclease 7 small subunit (Escherichia coli (strain SE11)).